We begin with the raw amino-acid sequence, 625 residues long: 1,4-alpha-glucan branching enzyme GlgB (625 aa).

The active-site Nucleophile is Asp-302. The active-site Proton donor is Glu-355.

The protein belongs to the glycosyl hydrolase 13 family. GlgB subfamily. Monomer.

The enzyme catalyses Transfers a segment of a (1-&gt;4)-alpha-D-glucan chain to a primary hydroxy group in a similar glucan chain.. The protein operates within glycan biosynthesis; glycogen biosynthesis. Catalyzes the formation of the alpha-1,6-glucosidic linkages in glycogen by scission of a 1,4-alpha-linked oligosaccharide from growing alpha-1,4-glucan chains and the subsequent attachment of the oligosaccharide to the alpha-1,6 position. The polypeptide is 1,4-alpha-glucan branching enzyme GlgB (Albidiferax ferrireducens (strain ATCC BAA-621 / DSM 15236 / T118) (Rhodoferax ferrireducens)).